A 174-amino-acid chain; its full sequence is MLWVVMDDLLYIGALGAPFGVRGQIRLHSISSHPEHLIRHLRTVFIGPKRVPHQVSRLYMHKPGLLIIQLQTITDRDAAADLRGEEVYIAAADAAPLAADEFFYHDVIGMQAVTDSGEDIGEVRDILETGAGEIVVITRRGRPDALVPMVRDFIVAIDVGERRLVIRPIAGLLD.

The region spanning 99–172 (ADEFFYHDVI…RLVIRPIAGL (74 aa)) is the PRC barrel domain.

This sequence belongs to the RimM family. As to quaternary structure, binds ribosomal protein uS19.

It localises to the cytoplasm. In terms of biological role, an accessory protein needed during the final step in the assembly of 30S ribosomal subunit, possibly for assembly of the head region. Essential for efficient processing of 16S rRNA. May be needed both before and after RbfA during the maturation of 16S rRNA. It has affinity for free ribosomal 30S subunits but not for 70S ribosomes. This Chloroflexus aurantiacus (strain ATCC 29366 / DSM 635 / J-10-fl) protein is Ribosome maturation factor RimM.